The chain runs to 392 residues: L-rhamnonate dehydratase (392 aa).

Positions 22 and 48 each coordinate substrate. Mg(2+)-binding residues include D214, E240, and E268. The active-site Proton acceptor is the H318. E338 serves as a coordination point for substrate.

The protein belongs to the mandelate racemase/muconate lactonizing enzyme family. RhamD subfamily. As to quaternary structure, homooctamer; tetramer of dimers. It depends on Mg(2+) as a cofactor.

It catalyses the reaction L-rhamnonate = 2-dehydro-3-deoxy-L-rhamnonate + H2O. In terms of biological role, catalyzes the dehydration of L-rhamnonate to 2-keto-3-deoxy-L-rhamnonate (KDR). The chain is L-rhamnonate dehydratase from Burkholderia ambifaria (strain ATCC BAA-244 / DSM 16087 / CCUG 44356 / LMG 19182 / AMMD) (Burkholderia cepacia (strain AMMD)).